Here is a 498-residue protein sequence, read N- to C-terminus: Glutamate--tRNA ligase (498 aa).

Positions 11 to 21 (PSPTGHLHIGN) match the 'HIGH' region motif. A 'KMSKS' region motif is present at residues 260-264 (KLSKR). Lys263 contacts ATP.

This sequence belongs to the class-I aminoacyl-tRNA synthetase family. Glutamate--tRNA ligase type 1 subfamily. Monomer.

It is found in the cytoplasm. It catalyses the reaction tRNA(Glu) + L-glutamate + ATP = L-glutamyl-tRNA(Glu) + AMP + diphosphate. Functionally, catalyzes the attachment of glutamate to tRNA(Glu) in a two-step reaction: glutamate is first activated by ATP to form Glu-AMP and then transferred to the acceptor end of tRNA(Glu). The sequence is that of Glutamate--tRNA ligase from Leuconostoc mesenteroides subsp. mesenteroides (strain ATCC 8293 / DSM 20343 / BCRC 11652 / CCM 1803 / JCM 6124 / NCDO 523 / NBRC 100496 / NCIMB 8023 / NCTC 12954 / NRRL B-1118 / 37Y).